The following is a 107-amino-acid chain: Phosphoribosyl-ATP pyrophosphatase (107 aa).

The protein belongs to the PRA-PH family.

The protein localises to the cytoplasm. It catalyses the reaction 1-(5-phospho-beta-D-ribosyl)-ATP + H2O = 1-(5-phospho-beta-D-ribosyl)-5'-AMP + diphosphate + H(+). It functions in the pathway amino-acid biosynthesis; L-histidine biosynthesis; L-histidine from 5-phospho-alpha-D-ribose 1-diphosphate: step 2/9. This Brucella abortus (strain S19) protein is Phosphoribosyl-ATP pyrophosphatase.